Consider the following 147-residue polypeptide: Large ribosomal subunit protein uL13 (147 aa).

This sequence belongs to the universal ribosomal protein uL13 family. Part of the 50S ribosomal subunit.

In terms of biological role, this protein is one of the early assembly proteins of the 50S ribosomal subunit, although it is not seen to bind rRNA by itself. It is important during the early stages of 50S assembly. The protein is Large ribosomal subunit protein uL13 of Lactobacillus delbrueckii subsp. bulgaricus (strain ATCC 11842 / DSM 20081 / BCRC 10696 / JCM 1002 / NBRC 13953 / NCIMB 11778 / NCTC 12712 / WDCM 00102 / Lb 14).